Here is a 530-residue protein sequence, read N- to C-terminus: Arginine--tRNA ligase (530 aa).

Residues 113–123 carry the 'HIGH' region motif; that stretch reads ANPTGPLHIGH.

This sequence belongs to the class-I aminoacyl-tRNA synthetase family. Monomer.

The protein resides in the cytoplasm. The enzyme catalyses tRNA(Arg) + L-arginine + ATP = L-arginyl-tRNA(Arg) + AMP + diphosphate. This chain is Arginine--tRNA ligase, found in Campylobacter jejuni subsp. jejuni serotype O:6 (strain 81116 / NCTC 11828).